A 312-amino-acid chain; its full sequence is Olfactory receptor 1D5 (312 aa).

The Extracellular portion of the chain corresponds to 1-25 (MDGDNQSENSQFLLLGISESPEQQQ). N5 carries an N-linked (GlcNAc...) asparagine glycan. A helical transmembrane segment spans residues 26–49 (ILFWMFLSMYLVTVLGNVLIILAI). The Cytoplasmic portion of the chain corresponds to 50-57 (SSDSHLHT). Residues 58–79 (PMYFFLANLSFTDLFFVTNTIP) form a helical membrane-spanning segment. Residues 80-100 (KMLVNFQSQNKAISYAGCLTQ) lie on the Extracellular side of the membrane. A disulfide bridge links C97 with C189. Residues 101 to 120 (LYFLVSLVTLDNLILAVMAY) form a helical membrane-spanning segment. The Cytoplasmic portion of the chain corresponds to 121–140 (DRYVAICCPLHYVTAMSPGL). A helical transmembrane segment spans residues 141-158 (CVLLLSLCWGLSVLYGLL). The Extracellular portion of the chain corresponds to 159–196 (LTLLLTRVTFCGPREIHYLFCDMYILLRLACSNTHIIH). Residues 197 to 220 (TVLVATGCFIFLTPLGFMTTSYVC) traverse the membrane as a helical segment. The Cytoplasmic segment spans residues 221–237 (IVRTILQIPSASKKYKA). Residues 238–260 (FSTCASHLGVVSLFYGTLAMVYL) form a helical membrane-spanning segment. At 261-271 (QPLHTYSMKDS) the chain is on the extracellular side. Residues 272 to 291 (VATVMYAVVTPMMNPFIYSL) traverse the membrane as a helical segment. The Cytoplasmic segment spans residues 292 to 312 (RNKDMHGALGRVLRRLFQRPK).

Belongs to the G-protein coupled receptor 1 family.

It is found in the cell membrane. Functionally, odorant receptor. This is Olfactory receptor 1D5 (OR1D5) from Pan paniscus (Pygmy chimpanzee).